Consider the following 208-residue polypeptide: Fibroblast growth factor-binding protein 2 (208 aa).

Positions 1 to 19 (MKRVALLFLVVICGMGGLG) are cleaved as a signal peptide. Disulfide bonds link cysteine 43/cysteine 59, cysteine 68/cysteine 102, and cysteine 77/cysteine 113. Positions 130–181 (EPEDGANRDKSSQKTSASVRGAGKSSVKKTGKPAVLPRIKPTQHGQGSENET) are disordered. Residues cysteine 191 and cysteine 199 are joined by a disulfide bond.

Belongs to the fibroblast growth factor-binding protein family.

It localises to the secreted. It is found in the extracellular space. This Gallus gallus (Chicken) protein is Fibroblast growth factor-binding protein 2 (FGFBP2).